The following is a 586-amino-acid chain: CTP synthase (586 aa).

The segment at 1 to 278 is amidoligase domain; sequence MRKHPQTATK…DAFVVRRLNL (278 aa). S20 lines the CTP pocket. S20 contributes to the UTP binding site. ATP contacts are provided by residues 21-26 and D78; that span reads SLGKGL. Mg(2+) is bound by residues D78 and E152. CTP-binding positions include 159–161, 199–204, and K235; these read DIE and KTKPTQ. Residues 199 to 204 and K235 contribute to the UTP site; that span reads KTKPTQ. Residues 303-551 enclose the Glutamine amidotransferase type-1 domain; sequence RIALVGKYVE…VGAAIDYKAG (249 aa). G366 is a binding site for L-glutamine. C393 acts as the Nucleophile; for glutamine hydrolysis in catalysis. L-glutamine contacts are provided by residues 394–397, E416, and R477; that span reads LGLQ. Catalysis depends on residues H524 and E526. The segment at 560–586 is disordered; that stretch reads EIPEHTPNGSSHRDGVGQPLPEPASRG.

This sequence belongs to the CTP synthase family. As to quaternary structure, homotetramer.

It carries out the reaction UTP + L-glutamine + ATP + H2O = CTP + L-glutamate + ADP + phosphate + 2 H(+). The enzyme catalyses L-glutamine + H2O = L-glutamate + NH4(+). It catalyses the reaction UTP + NH4(+) + ATP = CTP + ADP + phosphate + 2 H(+). It functions in the pathway pyrimidine metabolism; CTP biosynthesis via de novo pathway; CTP from UDP: step 2/2. Allosterically activated by GTP, when glutamine is the substrate; GTP has no effect on the reaction when ammonia is the substrate. The allosteric effector GTP functions by stabilizing the protein conformation that binds the tetrahedral intermediate(s) formed during glutamine hydrolysis. Inhibited by the product CTP, via allosteric rather than competitive inhibition. Functionally, catalyzes the ATP-dependent amination of UTP to CTP with either L-glutamine or ammonia as the source of nitrogen. Regulates intracellular CTP levels through interactions with the four ribonucleotide triphosphates. The protein is CTP synthase of Mycobacterium tuberculosis (strain ATCC 25177 / H37Ra).